A 147-amino-acid polypeptide reads, in one-letter code: Austinoid biosynthesis cluster protein H (147 aa).

Belongs to the trt14 isomerase family. Homodimer.

It participates in secondary metabolite biosynthesis; terpenoid biosynthesis. Its function is as follows. Part of the gene cluster that mediates the biosynthesis of calidodehydroaustin, a fungal meroterpenoid. The first step of the pathway is the synthesis of 3,5-dimethylorsellinic acid by the polyketide synthase ausA. 3,5-dimethylorsellinic acid is then prenylated by the polyprenyl transferase ausN. Further epoxidation by the FAD-dependent monooxygenase ausM and cyclization by the probable terpene cyclase ausL lead to the formation of protoaustinoid A. Protoaustinoid A is then oxidized to spiro-lactone preaustinoid A3 by the combined action of the FAD-binding monooxygenases ausB and ausC, and the dioxygenase ausE. Acid-catalyzed keto-rearrangement and ring contraction of the tetraketide portion of preaustinoid A3 by ausJ lead to the formation of preaustinoid A4. The aldo-keto reductase ausK, with the help of ausH, is involved in the next step by transforming preaustinoid A4 into isoaustinone which is in turn hydroxylated by the P450 monooxygenase ausI to form austinolide. The cytochrome P450 monooxygenase ausG modifies austinolide to austinol. Austinol is further acetylated to austin by the O-acetyltransferase ausP, which spontaneously changes to dehydroaustin. The cytochrome P450 monooxygenase ausR then converts dehydroaustin is into 7-dehydrodehydroaustin. The hydroxylation catalyzed by ausR permits the O-acetyltransferase ausQ to add an additional acetyl group to the molecule, leading to the formation of acetoxydehydroaustin. The short chain dehydrogenase ausT catalyzes the reduction of the double bond present between carbon atoms 1 and 2 to convert 7-dehydrodehydroaustin into 1,2-dihydro-7-hydroxydehydroaustin. AusQ catalyzes not only an acetylation reaction but also the addition of the PKS ausV diketide product to 1,2-dihydro-7-hydroxydehydroaustin, forming precalidodehydroaustin. Finally, the iron/alpha-ketoglutarate-dependent dioxygenase converts precalidodehydroaustin into calidodehydroaustin. The sequence is that of Austinoid biosynthesis cluster protein H from Aspergillus calidoustus.